The chain runs to 1088 residues: RNA-directed RNA polymerase (1088 aa).

A RdRp catalytic domain is found at 501-687 (LSYGDVTRFL…AKRYIAGGKI (187 aa)).

This sequence belongs to the reoviridae RNA-directed RNA polymerase family. Interacts with VP3 (Potential). Interacts with VP2; this interaction activates VP1. Interacts with NSP5; this interaction is probably necessary for the formation of functional virus factories. Interacts with NSP2; this interaction is weak. The cofactor is Mg(2+).

It is found in the virion. The enzyme catalyses RNA(n) + a ribonucleoside 5'-triphosphate = RNA(n+1) + diphosphate. RNA-directed RNA polymerase that is involved in both transcription and genome replication. Together with VP3 capping enzyme, forms an enzyme complex positioned near the channels situated at each of the five-fold vertices of the core. Following infection, the outermost layer of the virus is lost, leaving a double-layered particle (DLP) made up of the core and VP6 shell. VP1 then catalyzes the transcription of fully conservative plus-strand genomic RNAs that are extruded through the DLP's channels into the cytoplasm where they function as mRNAs for translation of viral proteins. One copy of each of the viral (+)RNAs is also recruited during core assembly, together with newly synthesized polymerase complexes and VP2. The polymerase of these novo-formed particles catalyzes the synthesis of complementary minus-strands leading to dsRNA formation. To do so, the polymerase specifically recognizes and binds 4 bases 5'-UGUG-3' in the conserved 3'-sequence of plus-strand RNA templates. VP2 presumably activates the autoinhibited VP1-RNA complex to coordinate packaging and genome replication. Once dsRNA synthesis is complete, the polymerase switches to the transcriptional mode, thus providing secondary transcription. This chain is RNA-directed RNA polymerase, found in Rotavirus A (strain RVA/SA11-Patton/G3P[X]) (RV-A).